Here is a 441-residue protein sequence, read N- to C-terminus: Interferon-related developmental regulator 2 (441 aa).

A compositionally biased stretch (basic residues) spans 1 to 15 (MPRARKGNALRKGGQ). The interval 1–51 (MPRARKGNALRKGGQRRGGGARSSTQADSGSSEDEAASEARSTTSDCPSLL) is disordered.

The protein belongs to the IFRD family. In terms of assembly, associates with ribosomes; promoting ribosome inactivation.

Ribosome-binding protein that acts as an inhibitor of mRNA translation by promoting ribosome inactivation. Associates with the P- and E-sites of the ribosome and inserts a C-terminal helix into the mRNA exit channel to preclude translation. The chain is Interferon-related developmental regulator 2 from Mus musculus (Mouse).